Reading from the N-terminus, the 122-residue chain is MSLTNEQLIEAIASKSVSEIVELIAAMEEKFGVSAAAAVAAAPAAGAAAAEEKTEFDVILAEAGANKVAVIKAVRGATGLGLKEAKDLVESAPAALKEGISKPEAEALKKELEEAGAKVEIK.

Belongs to the bacterial ribosomal protein bL12 family. As to quaternary structure, homodimer. Part of the ribosomal stalk of the 50S ribosomal subunit. Forms a multimeric L10(L12)X complex, where L10 forms an elongated spine to which 2 to 4 L12 dimers bind in a sequential fashion. Binds GTP-bound translation factors.

Forms part of the ribosomal stalk which helps the ribosome interact with GTP-bound translation factors. Is thus essential for accurate translation. This chain is Large ribosomal subunit protein bL12, found in Actinobacillus pleuropneumoniae serotype 5b (strain L20).